The primary structure comprises 259 residues: Flap endonuclease Xni (259 aa).

Asp-109 contacts Mg(2+). The 91-residue stretch at 165-255 (LKPEQLADYW…FNLQDIRYEK (91 aa)) folds into the 5'-3' exonuclease domain. The K(+) site is built by Leu-176, Ala-177, Ile-187, and Val-190. The interaction with DNA stretch occupies residues 189–194 (GVGPKA).

Belongs to the Xni family. Requires Mg(2+) as cofactor. The cofactor is K(+).

Has flap endonuclease activity. During DNA replication, flap endonucleases cleave the 5'-overhanging flap structure that is generated by displacement synthesis when DNA polymerase encounters the 5'-end of a downstream Okazaki fragment. The polypeptide is Flap endonuclease Xni (Aliivibrio fischeri (strain ATCC 700601 / ES114) (Vibrio fischeri)).